The sequence spans 684 residues: Zinc finger BED domain-containing protein RICESLEEPER 4 (684 aa).

The segment at 54–113 adopts a BED-type zinc-finger fold; it reads KRKSAIWEHFTLVDVSDGCKRASCIHCNQSLAYSSGSKNSGTSHLTRHIAEWCRVLKDRQ. Cys-77, Cys-80, His-101, and Cys-106 together coordinate Zn(2+). The interval 595-680 is HATC (Hobo-Ac-Tam3) domain; the sequence is ELELYLEEAL…EALLCAKDWL (86 aa).

In terms of assembly, homodimer.

It is found in the nucleus. Transposase-like protein that is essential for plant growth and development. May regulate global gene expression by recruiting other cellular factors. The sequence is that of Zinc finger BED domain-containing protein RICESLEEPER 4 from Oryza sativa subsp. japonica (Rice).